A 388-amino-acid chain; its full sequence is Chorismate synthase (388 aa).

Residues R39 and R45 each contribute to the NADP(+) site. Residues 130-132 (RSS), 251-252 (NA), A296, 311-315 (KPIPT), and R337 each bind FMN.

This sequence belongs to the chorismate synthase family. Homotetramer. It depends on FMNH2 as a cofactor.

The catalysed reaction is 5-O-(1-carboxyvinyl)-3-phosphoshikimate = chorismate + phosphate. The protein operates within metabolic intermediate biosynthesis; chorismate biosynthesis; chorismate from D-erythrose 4-phosphate and phosphoenolpyruvate: step 7/7. Its function is as follows. Catalyzes the anti-1,4-elimination of the C-3 phosphate and the C-6 proR hydrogen from 5-enolpyruvylshikimate-3-phosphate (EPSP) to yield chorismate, which is the branch point compound that serves as the starting substrate for the three terminal pathways of aromatic amino acid biosynthesis. This reaction introduces a second double bond into the aromatic ring system. In Streptococcus equi subsp. zooepidemicus (strain MGCS10565), this protein is Chorismate synthase.